Consider the following 351-residue polypeptide: UPF0252 protein MJECL39 (351 aa).

2 helical membrane-spanning segments follow: residues 58 to 78 (FITF…VWLW) and 91 to 111 (IIIC…LCGV).

The protein belongs to the UPF0252 family.

Its subcellular location is the cell membrane. This is UPF0252 protein MJECL39 from Methanocaldococcus jannaschii (strain ATCC 43067 / DSM 2661 / JAL-1 / JCM 10045 / NBRC 100440) (Methanococcus jannaschii).